The primary structure comprises 272 residues: Cell division protein FtsQ (272 aa).

The Cytoplasmic segment spans residues 1–43; the sequence is MEYNPPNTRERIAARRQRLRQPSSEPAIPGWRRRFIDGLQSGR. Residues 44–64 traverse the membrane as a helical segment; sequence IVSGAVFVVSCLALFYVLFSS. The Extracellular segment spans residues 65–272; that stretch reads QFRVQTVEVV…FYQNRTDGRS (208 aa). The region spanning 66–133 is the POTRA domain; it reads FRVQTVEVVG…DRARIVIVER (68 aa).

It belongs to the FtsQ/DivIB family. FtsQ subfamily.

The protein resides in the cell membrane. Essential cell division protein. This chain is Cell division protein FtsQ, found in Chloroflexus aggregans (strain MD-66 / DSM 9485).